The following is a 142-amino-acid chain: MSKPKHIRTLADTEAQAVARNIRVSPRKLNLVAAMIRNQPADKAIAALTFSRRRIAQQVKKTLESAVANAENNHQLDVDQLVVKTAEVGKSIVMKRFHARGRGRSARVEKFFSHLKIVVAERAEAPEETKPSRGTNKEQKAA.

Residues 122 to 142 (RAEAPEETKPSRGTNKEQKAA) form a disordered region.

It belongs to the universal ribosomal protein uL22 family. Part of the 50S ribosomal subunit.

Functionally, this protein binds specifically to 23S rRNA; its binding is stimulated by other ribosomal proteins, e.g. L4, L17, and L20. It is important during the early stages of 50S assembly. It makes multiple contacts with different domains of the 23S rRNA in the assembled 50S subunit and ribosome. In terms of biological role, the globular domain of the protein is located near the polypeptide exit tunnel on the outside of the subunit, while an extended beta-hairpin is found that lines the wall of the exit tunnel in the center of the 70S ribosome. In Gluconobacter oxydans (strain 621H) (Gluconobacter suboxydans), this protein is Large ribosomal subunit protein uL22.